A 233-amino-acid polypeptide reads, in one-letter code: MFFICNVGPFRSWKESKIFWKMEDGSPNDIQLILVTATDSSLPSGNSNQDKFCKFGFVCLSTSFERGVESDNGRDWNFCLIIISSWAVLPVPGGPVMYSESDLCSEIAFAKKFITCSYSAVLAGNAPSLLFKLTSSDDFCKSAFVLKKIDCEPNCSFSGDDSGVTSVNCNFFLFKGRGGVAGASSNRFLLIRLVGVIGIADMNVYGTIDENSAAQCSEYSKIVLPENIPLLYK.

A run of 3 helical transmembrane segments spans residues 78–98 (FCLIIISSWAVLPVPGGPVMY), 113–133 (FITCSYSAVLAGNAPSLLFKL), and 188–208 (FLLIRLVGVIGIADMNVYGTI).

The protein localises to the membrane. This is an uncharacterized protein from Saccharomyces cerevisiae (strain ATCC 204508 / S288c) (Baker's yeast).